The sequence spans 1416 residues: DNA-directed RNA polymerase subunit beta' (1416 aa).

Zn(2+) contacts are provided by cysteine 60, cysteine 62, cysteine 75, and cysteine 78. Mg(2+) contacts are provided by aspartate 449, aspartate 451, and aspartate 453. Residues cysteine 781, cysteine 855, cysteine 862, and cysteine 865 each coordinate Zn(2+).

This sequence belongs to the RNA polymerase beta' chain family. In terms of assembly, the RNAP catalytic core consists of 2 alpha, 1 beta, 1 beta' and 1 omega subunit. When a sigma factor is associated with the core the holoenzyme is formed, which can initiate transcription. It depends on Mg(2+) as a cofactor. Requires Zn(2+) as cofactor.

The catalysed reaction is RNA(n) + a ribonucleoside 5'-triphosphate = RNA(n+1) + diphosphate. DNA-dependent RNA polymerase catalyzes the transcription of DNA into RNA using the four ribonucleoside triphosphates as substrates. This is DNA-directed RNA polymerase subunit beta' from Treponema pallidum (strain Nichols).